The sequence spans 321 residues: Tetraacyldisaccharide 4'-kinase (321 aa).

54 to 61 (SVGGTGKT) is an ATP binding site.

It belongs to the LpxK family.

The catalysed reaction is a lipid A disaccharide + ATP = a lipid IVA + ADP + H(+). It participates in glycolipid biosynthesis; lipid IV(A) biosynthesis; lipid IV(A) from (3R)-3-hydroxytetradecanoyl-[acyl-carrier-protein] and UDP-N-acetyl-alpha-D-glucosamine: step 6/6. Its function is as follows. Transfers the gamma-phosphate of ATP to the 4'-position of a tetraacyldisaccharide 1-phosphate intermediate (termed DS-1-P) to form tetraacyldisaccharide 1,4'-bis-phosphate (lipid IVA). The sequence is that of Tetraacyldisaccharide 4'-kinase from Rickettsia africae (strain ESF-5).